A 152-amino-acid chain; its full sequence is Xanthine-guanine phosphoribosyltransferase (152 aa).

Residues Arg37 to Gly38, Arg69, and Asp88 to Thr96 each bind 5-phospho-alpha-D-ribose 1-diphosphate. Arg69 is a GMP binding site. Asp89 lines the Mg(2+) pocket. Residues Asp92 and Ile135 each contribute to the guanine site. Xanthine is bound by residues Asp92 and Ile135. GMP-binding positions include Asp92 to Thr96 and Trp134 to Ile135.

This sequence belongs to the purine/pyrimidine phosphoribosyltransferase family. XGPT subfamily. Homotetramer. Mg(2+) serves as cofactor.

It is found in the cell inner membrane. The catalysed reaction is GMP + diphosphate = guanine + 5-phospho-alpha-D-ribose 1-diphosphate. It catalyses the reaction XMP + diphosphate = xanthine + 5-phospho-alpha-D-ribose 1-diphosphate. The enzyme catalyses IMP + diphosphate = hypoxanthine + 5-phospho-alpha-D-ribose 1-diphosphate. The protein operates within purine metabolism; GMP biosynthesis via salvage pathway; GMP from guanine: step 1/1. Its pathway is purine metabolism; XMP biosynthesis via salvage pathway; XMP from xanthine: step 1/1. Functionally, purine salvage pathway enzyme that catalyzes the transfer of the ribosyl-5-phosphate group from 5-phospho-alpha-D-ribose 1-diphosphate (PRPP) to the N9 position of the 6-oxopurines guanine and xanthine to form the corresponding ribonucleotides GMP (guanosine 5'-monophosphate) and XMP (xanthosine 5'-monophosphate), with the release of PPi. To a lesser extent, also acts on hypoxanthine. This chain is Xanthine-guanine phosphoribosyltransferase, found in Citrobacter koseri (strain ATCC BAA-895 / CDC 4225-83 / SGSC4696).